The following is a 413-amino-acid chain: Phosphoglycerate kinase (413 aa).

Residues 19 to 21, Arg-34, 57 to 60, Arg-114, and Arg-154 each bind substrate; these read DLN and HQSK. Residues Glu-332 and 358–361 each bind ATP; that span reads GGHS.

This sequence belongs to the phosphoglycerate kinase family. Monomer.

It localises to the cytoplasm. The enzyme catalyses (2R)-3-phosphoglycerate + ATP = (2R)-3-phospho-glyceroyl phosphate + ADP. It functions in the pathway carbohydrate degradation; glycolysis; pyruvate from D-glyceraldehyde 3-phosphate: step 2/5. This Thermococcus sibiricus (strain DSM 12597 / MM 739) protein is Phosphoglycerate kinase.